A 417-amino-acid chain; its full sequence is D-amino acid dehydrogenase (417 aa).

3–17 contributes to the FAD binding site; sequence VIVLGSGVIGVTAAW.

Belongs to the DadA oxidoreductase family. FAD serves as cofactor.

It carries out the reaction a D-alpha-amino acid + A + H2O = a 2-oxocarboxylate + AH2 + NH4(+). The protein operates within amino-acid degradation; D-alanine degradation; NH(3) and pyruvate from D-alanine: step 1/1. Its function is as follows. Oxidative deamination of D-amino acids. In Methylobacillus flagellatus (strain ATCC 51484 / DSM 6875 / VKM B-1610 / KT), this protein is D-amino acid dehydrogenase.